Consider the following 454-residue polypeptide: Tol-Pal system protein TolB (454 aa).

The first 21 residues, 1 to 21 (MSLRPISLMLALLLTSAPALA), serve as a signal peptide directing secretion.

This sequence belongs to the TolB family. In terms of assembly, the Tol-Pal system is composed of five core proteins: the inner membrane proteins TolA, TolQ and TolR, the periplasmic protein TolB and the outer membrane protein Pal. They form a network linking the inner and outer membranes and the peptidoglycan layer.

The protein localises to the periplasm. Functionally, part of the Tol-Pal system, which plays a role in outer membrane invagination during cell division and is important for maintaining outer membrane integrity. This is Tol-Pal system protein TolB from Sphingopyxis alaskensis (strain DSM 13593 / LMG 18877 / RB2256) (Sphingomonas alaskensis).